A 501-amino-acid chain; its full sequence is Aldehyde dehydrogenase 1A1 (501 aa).

The residue at position 2 (serine 2) is an N-acetylserine. N6-acetyllysine occurs at positions 91 and 128. NAD(+)-binding positions include 167 to 170, 193 to 196, 226 to 227, and 246 to 247; these read IPWN, KPAE, GP, and GS. Lysine 252 is subject to N6-acetyllysine. Glutamate 269 acts as the Proton acceptor in catalysis. 269–271 contacts NAD(+); the sequence is ELG. Cysteine 303 functions as the Nucleophile in the catalytic mechanism. The tract at residues 336–501 is mediates interaction with PRMT3; that stretch reads LTPGATQGPQ…VTVKISQKNS (166 aa). A Phosphothreonine modification is found at threonine 337. 349–353 contributes to the NAD(+) binding site; sequence EQYDK. N6-acetyllysine is present on residues lysine 353 and lysine 367. 400–402 lines the NAD(+) pocket; sequence EIF. The residue at position 410 (lysine 410) is an N6-acetyllysine. Serine 413 bears the Phosphoserine mark. Lysine 419 and lysine 495 each carry N6-acetyllysine.

It belongs to the aldehyde dehydrogenase family. In terms of assembly, homotetramer. Interacts with PRMT3; the interaction is direct, inhibits ALDH1A1 aldehyde dehydrogenase activity and is independent of the methyltransferase activity of PRMT3. Post-translationally, the N-terminus is blocked most probably by acetylation.

It localises to the cytoplasm. Its subcellular location is the cytosol. The protein localises to the cell projection. It is found in the axon. It catalyses the reaction an aldehyde + NAD(+) + H2O = a carboxylate + NADH + 2 H(+). It carries out the reaction all-trans-retinal + NAD(+) + H2O = all-trans-retinoate + NADH + 2 H(+). The enzyme catalyses 9-cis-retinal + NAD(+) + H2O = 9-cis-retinoate + NADH + 2 H(+). The catalysed reaction is 11-cis-retinal + NAD(+) + H2O = 11-cis-retinoate + NADH + 2 H(+). It catalyses the reaction 13-cis-retinal + NAD(+) + H2O = 13-cis-retinoate + NADH + 2 H(+). It carries out the reaction 3-deoxyglucosone + NAD(+) + H2O = 2-dehydro-3-deoxy-D-gluconate + NADH + 2 H(+). The enzyme catalyses (E)-4-hydroxynon-2-enal + NAD(+) + H2O = (E)-4-hydroxynon-2-enoate + NADH + 2 H(+). The catalysed reaction is malonaldehyde + NAD(+) + H2O = 3-oxopropanoate + NADH + 2 H(+). It catalyses the reaction hexanal + NAD(+) + H2O = hexanoate + NADH + 2 H(+). It carries out the reaction propanal + NAD(+) + H2O = propanoate + NADH + 2 H(+). The enzyme catalyses acetaldehyde + NAD(+) + H2O = acetate + NADH + 2 H(+). The catalysed reaction is benzaldehyde + NAD(+) + H2O = benzoate + NADH + 2 H(+). It catalyses the reaction 4-aminobutanal + NAD(+) + H2O = 4-aminobutanoate + NADH + 2 H(+). It participates in cofactor metabolism; retinol metabolism. Its function is as follows. Cytosolic dehydrogenase that catalyzes the irreversible oxidation of a wide range of aldehydes to their corresponding carboxylic acid. Functions downstream of retinol dehydrogenases and catalyzes the oxidation of retinaldehyde into retinoic acid, the second step in the oxidation of retinol/vitamin A into retinoic acid. This pathway is crucial to control the levels of retinol and retinoic acid, two important molecules which excess can be teratogenic and cytotoxic. Also oxidizes aldehydes resulting from lipid peroxidation like (E)-4-hydroxynon-2-enal/HNE, malonaldehyde and hexanal that form protein adducts and are highly cytotoxic. By participating for instance to the clearance of (E)-4-hydroxynon-2-enal/HNE in the lens epithelium prevents the formation of HNE-protein adducts and lens opacification. Also functions downstream of fructosamine-3-kinase in the fructosamine degradation pathway by catalyzing the oxidation of 3-deoxyglucosone, the carbohydrate product of fructosamine 3-phosphate decomposition, which is itself a potent glycating agent that may react with lysine and arginine side-chains of proteins. Also has an aminobutyraldehyde dehydrogenase activity and is probably part of an alternative pathway for the biosynthesis of GABA/4-aminobutanoate in midbrain, thereby playing a role in GABAergic synaptic transmission. In Macaca fascicularis (Crab-eating macaque), this protein is Aldehyde dehydrogenase 1A1.